Reading from the N-terminus, the 255-residue chain is 3-deoxy-manno-octulosonate cytidylyltransferase (255 aa).

It belongs to the KdsB family.

It is found in the cytoplasm. It catalyses the reaction 3-deoxy-alpha-D-manno-oct-2-ulosonate + CTP = CMP-3-deoxy-beta-D-manno-octulosonate + diphosphate. It participates in nucleotide-sugar biosynthesis; CMP-3-deoxy-D-manno-octulosonate biosynthesis; CMP-3-deoxy-D-manno-octulosonate from 3-deoxy-D-manno-octulosonate and CTP: step 1/1. Its pathway is bacterial outer membrane biogenesis; lipopolysaccharide biosynthesis. Activates KDO (a required 8-carbon sugar) for incorporation into bacterial lipopolysaccharide in Gram-negative bacteria. This Hahella chejuensis (strain KCTC 2396) protein is 3-deoxy-manno-octulosonate cytidylyltransferase.